The primary structure comprises 132 residues: Small ribosomal subunit protein uS8 (132 aa).

This sequence belongs to the universal ribosomal protein uS8 family. As to quaternary structure, part of the 30S ribosomal subunit. Contacts proteins S5 and S12.

In terms of biological role, one of the primary rRNA binding proteins, it binds directly to 16S rRNA central domain where it helps coordinate assembly of the platform of the 30S subunit. This Ehrlichia canis (strain Jake) protein is Small ribosomal subunit protein uS8.